Consider the following 310-residue polypeptide: Probable L,D-transpeptidase ErfK/SrfK (310 aa).

The first 21 residues, 1–21, serve as a signal peptide directing secretion; sequence MRRVNILCSFALLFASHTSLA. In terms of domain architecture, L,D-TPase catalytic spans 96 to 231; that stretch reads KGIVVNVAEM…VPVGTRVQII (136 aa). The active-site Proton donor/acceptor is histidine 191. Cysteine 207 serves as the catalytic Nucleophile.

The protein belongs to the YkuD family. Interacts with DsbG.

It is found in the periplasm. The protein operates within cell wall biogenesis; peptidoglycan biosynthesis. Functionally, responsible, at least in part, for anchoring of the major outer membrane lipoprotein (Lpp, also known as the Braun lipoprotein) to the peptidoglycan via a meso-diaminopimelyl-L-Lys- bond on the terminal residue of Lpp. The polypeptide is Probable L,D-transpeptidase ErfK/SrfK (erfK) (Escherichia coli (strain K12)).